We begin with the raw amino-acid sequence, 303 residues long: MSIRSLGYMGFAVSDVAAWRSFLTQKLGLMEAGTTDNGDLFRIDSRAWRIAVQQGEVDDLAFAGYEVADAAGLAQMADKLKQAGIAVTTGDASLARRRGVTGLITFADPFGLPLEIYYGASEVFEKPFLPGAAVSGFLTGEQGLGHFVRCVPDSDKALAFYTDVLGFQLSDVIDMKMGPDVTVPVYFLHCNERHHTLAIAAFPLPKRIHHFMLEVASLDDVGFAFDRVDADGLITSTLGRHTNDHMVSFYASTPSGVEVEYGWSARTVDRSWVVVRHDSPSMWGHKSVRDKALRATKHEQQPE.

VOC domains lie at 5 to 119 (SLGY…IYYG) and 143 to 264 (GLGH…YGWS). Residues His146, His210, and Glu260 each contribute to the Fe cation site. Residues 283-303 (WGHKSVRDKALRATKHEQQPE) form a disordered region. A compositionally biased stretch (basic and acidic residues) spans 287 to 303 (SVRDKALRATKHEQQPE).

Belongs to the extradiol ring-cleavage dioxygenase family. Homooctamer. Fe(2+) is required as a cofactor.

It catalyses the reaction biphenyl-2,3-diol + O2 = 2-hydroxy-6-oxo-6-phenylhexa-2,4-dienoate + H(+). It functions in the pathway xenobiotic degradation; biphenyl degradation; 2-hydroxy-2,4-pentadienoate and benzoate from biphenyl: step 3/4. This chain is Biphenyl-2,3-diol 1,2-dioxygenase (bphC), found in Metapseudomonas furukawaii (Pseudomonas furukawaii).